We begin with the raw amino-acid sequence, 328 residues long: Methionyl-tRNA formyltransferase (328 aa).

(6S)-5,6,7,8-tetrahydrofolate is bound at residue 110-113 (SLLP).

This sequence belongs to the Fmt family.

The enzyme catalyses L-methionyl-tRNA(fMet) + (6R)-10-formyltetrahydrofolate = N-formyl-L-methionyl-tRNA(fMet) + (6S)-5,6,7,8-tetrahydrofolate + H(+). Functionally, attaches a formyl group to the free amino group of methionyl-tRNA(fMet). The formyl group appears to play a dual role in the initiator identity of N-formylmethionyl-tRNA by promoting its recognition by IF2 and preventing the misappropriation of this tRNA by the elongation apparatus. This chain is Methionyl-tRNA formyltransferase, found in Prochlorococcus marinus (strain MIT 9215).